Reading from the N-terminus, the 40-residue chain is Cytochrome b6-f complex subunit 5 (40 aa).

The chain crosses the membrane as a helical span at residues 5–25 (ILLGMVLGFVPVTIAGLLVAA).

This sequence belongs to the PetG family. As to quaternary structure, the 4 large subunits of the cytochrome b6-f complex are cytochrome b6, subunit IV (17 kDa polypeptide, PetD), cytochrome f and the Rieske protein, while the 4 small subunits are PetG, PetL, PetM and PetN. The complex functions as a dimer.

The protein localises to the cell inner membrane. Its function is as follows. Component of the cytochrome b6-f complex, which mediates electron transfer between photosystem II (PSII) and photosystem I (PSI), cyclic electron flow around PSI, and state transitions. PetG is required for either the stability or assembly of the cytochrome b6-f complex. In Gloeobacter violaceus (strain ATCC 29082 / PCC 7421), this protein is Cytochrome b6-f complex subunit 5.